The chain runs to 103 residues: A-type ATP synthase subunit F (103 aa).

Belongs to the V-ATPase F subunit family. In terms of assembly, has multiple subunits with at least A(3), B(3), C, D, E, F, H, I and proteolipid K(x).

It is found in the cell membrane. Functionally, component of the A-type ATP synthase that produces ATP from ADP in the presence of a proton gradient across the membrane. This is A-type ATP synthase subunit F from Pyrococcus abyssi (strain GE5 / Orsay).